A 183-amino-acid polypeptide reads, in one-letter code: NADH dehydrogenase [ubiquinone] iron-sulfur protein 4, mitochondrial (183 aa).

A mitochondrion-targeting transit peptide spans 1–28 (MSALRQVMCRSTASLQLYQANRAAAARW). Phosphoserine is present on serine 181.

The protein belongs to the complex I NDUFS4 subunit family.

It localises to the mitochondrion inner membrane. Accessory subunit of the mitochondrial membrane respiratory chain NADH dehydrogenase (Complex I), that is believed not to be involved in catalysis. Complex I functions in the transfer of electrons from NADH to the respiratory chain. The immediate electron acceptor for the enzyme is believed to be ubiquinone. This Drosophila melanogaster (Fruit fly) protein is NADH dehydrogenase [ubiquinone] iron-sulfur protein 4, mitochondrial.